Here is a 1563-residue protein sequence, read N- to C-terminus: Galactose-specific cell agglutination protein gsf2 (1563 aa).

The first 27 residues, 1-27 (MSVRRFLSTSARALLFTAALLPSLTSG), serve as a signal peptide directing secretion. Tandem repeats lie at residues 203 to 280 (TTTT…PTTV), 281 to 358 (TTTT…PTTV), 359 to 436 (TTTT…PTTV), 437 to 514 (TTTT…PTTV), 515 to 592 (TTTT…PTTV), 593 to 670 (TTTT…PTTV), 671 to 750 (TTTT…VSAT), 751 to 825 (TTTT…GTTT), 826 to 869 (VVIQ…GTTT), 870 to 913 (VVIQ…GTTT), 914 to 957 (VVIQ…GTTT), 958 to 1001 (VVIQ…GTTT), 1002 to 1045 (VVIQ…GTTT), 1046 to 1089 (VVIQ…GTTT), 1090 to 1133 (VVIQ…GTTT), 1134 to 1140 (VVINTPT), 1141 to 1162 (TTGSEVLPTTGATGTAGTETQL), 1163 to 1184 (TTATEVQPTTGATGTAGTETQV), 1185 to 1200 (TTGTETQATTATETQA), 1201 to 1221 (TTATEVQTTTGATGTAGTETQ), 1223 to 1244 (TTATEVQPTTGATGTAGTETQV), 1245 to 1266 (TTATEVQPTTGATGTAGTETQV), 1267 to 1282 (TTGTETQATTATETQA), 1283 to 1304 (TTATEVQTTTGATGTAGTETQA), 1305 to 1326 (TTATEVQPTTGATGTAGTETQV), 1327 to 1348 (TTATEVQPTTGATGTAGTETQV), 1349 to 1364 (TTGTETQATTATETQA), 1365 to 1386 (TTATEVQTTTGATGTAGTETQV), and 1387 to 1397 (TTATEVQPTTA). Positions 203 to 825 (TTTTTVGYPG…IPTGTTGTTT (623 aa)) are 8 X 78 AA approximate tandem repeats. Asn-224, Asn-263, Asn-302, Asn-341, Asn-380, Asn-419, Asn-458, Asn-497, Asn-536, Asn-575, Asn-614, and Asn-653 each carry an N-linked (GlcNAc...) asparagine glycan. An N-linked (GlcNAc...) asparagine glycan is attached at Asn-784. The segment at 826-1140 (VVIQTPTTVT…TTTVVINTPT (315 aa)) is 8 X 44 AA approximate tandem repeats. The tract at residues 1135–1393 (VINTPTTTGS…TQVTTATEVQ (259 aa)) is disordered. The interval 1141-1397 (TTGSEVLPTT…TATEVQPTTA (257 aa)) is 13 X 22 AA approximate tandem repeats. N-linked (GlcNAc...) asparagine glycosylation is found at Asn-1510, Asn-1516, Asn-1529, and Asn-1532. A lipid anchor (GPI-anchor amidated serine) is attached at Ser-1539. A propeptide spans 1540-1563 (SAGANKPIAYLTFVSLFVYIVTLI) (removed in mature form).

It belongs to the mam3/map4 family.

Its subcellular location is the cell membrane. Its function is as follows. Galactose-specific adhesion protein essential for non-sexual flocculation and filamentous growth. Required for adhesion and filamentous growth through recognition of galactose residues on cell surface glycoconjugates. Induces flocculation when overexpressed. This is Galactose-specific cell agglutination protein gsf2 from Schizosaccharomyces pombe (strain 972 / ATCC 24843) (Fission yeast).